The sequence spans 363 residues: MAGKSPEEQHPVKAYGWAATDSSGILSPFKFSRRATGDHDVRVKILYAGVCHSDLQSARNDMGCFTYPLVPGFETVGTATEVGSKVTKVKVGDKVAVGIMVGSCGKCDECVNDRECYCPEVITSYGRIDHDGTPTYGGFSSETVANEKFVFCFPEKLPMAAGAPLLNAGVSVYSAMRFYGLDKPGMHLGVVGLGGLGHLAVKFAKAFGVKVTVISTSTSKKGEAINDLGADAFLVSTDAEQMQAGSGTLDGILDTVPVVHPIEALLGLLKNHTKLVLVGATMGSFELPILPLGVGRKSVVSTIGGSTKETQEMLDFAAEHDITASVEIIPMDYVNTAMERIEKGDVRYRFVIDIGNTLTPPES.

An Enoyl reductase (ER) domain is found at 24-352 (GILSPFKFSR…KGDVRYRFVI (329 aa)). Cysteine 51 lines the Zn(2+) pocket. NADP(+) is bound at residue serine 53. Zn(2+) is bound by residues aspartate 54, glutamate 74, cysteine 104, cysteine 107, cysteine 110, and cysteine 118. Residues leucine 193, glycine 195, leucine 196, serine 215, threonine 216, serine 217, lysine 220, lysine 221, valine 278, alanine 280, threonine 302, and arginine 349 each contribute to the NADP(+) site.

Belongs to the zinc-containing alcohol dehydrogenase family. Class-P subfamily. In terms of assembly, homodimer. The cofactor is Zn(2+). In terms of tissue distribution, mainly expressed in mature roots and, to a lower extent, in stems and leaves.

It localises to the cytoplasm. The catalysed reaction is 17-O-acetylnorajmaline + NADP(+) = (2R)-1,2-dihydrovomilenine + NADPH + 2 H(+). It catalyses the reaction (20S)-19,20-dihydrovomilenine + NADP(+) = vomilenine + NADPH + H(+). Its pathway is alkaloid biosynthesis; ajmaline biosynthesis. In terms of biological role, alcohol dehydrogenase involved in the biosynthesis of ajmaline-type monoterpenoid indole alkaloids (MIAs) natural products, important plant-derived pharmaceuticals used in the therapy of heart disorders. Catalyzes the conversion of 1,2-dihydrovomilenine to 17-O-acetylnorajmaline, an intermediate chemical in the biosynthesis of ajmaline. Also able, with a lower efficiency, to convert vomilenine into 19,20-dihydrovomilenine. The sequence is that of 1,2-Dihydrovomilenine reductase from Rauvolfia serpentina (Serpentine wood).